A 239-amino-acid chain; its full sequence is Tetraspanin-9 (239 aa).

Topologically, residues 1-13 are cytoplasmic; that stretch reads MARGCLCCLKYMM. Residues 14 to 34 form a helical membrane-spanning segment; sequence FLFNLIFWLCGCGLLGVGIWL. Residues 35-55 lie on the Extracellular side of the membrane; the sequence is SVSQGNFATFSPSFPSLSAAN. The helical transmembrane segment at 56-76 threads the bilayer; the sequence is LVIAIGTIVMVTGFLGCLGAI. The Cytoplasmic portion of the chain corresponds to 77–85; the sequence is KENRCLLLS. Residues 86–106 form a helical membrane-spanning segment; that stretch reads FFIVLLIILLAELILIILFFV. The Extracellular portion of the chain corresponds to 107–203; the sequence is YMDKVNENAR…VKMWFDDNKH (97 aa). Asn180 carries N-linked (GlcNAc...) asparagine glycosylation. Residues 204 to 224 form a helical membrane-spanning segment; it reads VLGTVGMCILIMQILGMAFSM. The Cytoplasmic segment spans residues 225–239; it reads TLFQHIHRTGKKYDA.

It belongs to the tetraspanin (TM4SF) family. In terms of assembly, found in a complex with GP6. In terms of processing, glycosylated.

It localises to the membrane. The protein is Tetraspanin-9 (TSPAN9) of Sus scrofa (Pig).